Reading from the N-terminus, the 222-residue chain is Probable fimbrial chaperone EcpB (222 aa).

An N-terminal signal peptide occupies residues 1–20; sequence MKKHLLPLALLFSGISPAQA.

The protein belongs to the EcpB/EcpE family.

Its function is as follows. Part of the ecpRABCDE operon, which encodes the E.coli common pilus (ECP). ECP is found in both commensal and pathogenic strains and plays a dual role in early-stage biofilm development and host cell recognition. The polypeptide is Probable fimbrial chaperone EcpB (ecpB) (Escherichia coli (strain K12)).